Here is a 458-residue protein sequence, read N- to C-terminus: Adenylosuccinate synthetase (458 aa).

Residues 17–23 (GDEGKGK) and 45–47 (GHT) contribute to the GTP site. The active-site Proton acceptor is Asp18. Mg(2+) contacts are provided by Asp18 and Gly45. Residues 18 to 21 (DEGK), 43 to 46 (NAGH), Thr137, Arg151, Gln247, Thr262, and Arg330 contribute to the IMP site. The active-site Proton donor is the His46. 326-332 (VTTGRSR) provides a ligand contact to substrate. Residues Arg332, 358–360 (KLD), and 440–442 (STG) each bind GTP.

It belongs to the adenylosuccinate synthetase family. Homodimer. The cofactor is Mg(2+).

The protein resides in the cytoplasm. It catalyses the reaction IMP + L-aspartate + GTP = N(6)-(1,2-dicarboxyethyl)-AMP + GDP + phosphate + 2 H(+). It participates in purine metabolism; AMP biosynthesis via de novo pathway; AMP from IMP: step 1/2. Functionally, plays an important role in the de novo pathway of purine nucleotide biosynthesis. Catalyzes the first committed step in the biosynthesis of AMP from IMP. The polypeptide is Adenylosuccinate synthetase (Albidiferax ferrireducens (strain ATCC BAA-621 / DSM 15236 / T118) (Rhodoferax ferrireducens)).